The following is a 1159-amino-acid chain: MPGGGPAMDDYMETLKDEEEALWDNVECNRHMLSRYINPAKLTPYLRQCKVIDEQDEDEVLNAPMLPSKINRAGRLLDILHTKGQRGYVVFLESLEFYYPELYKLVTGKEPTRRFSTIVVEEGHEGLTHFLMNEVIKLQQQVKAKDLQRCELLAKSRQLEDEKKQLSLIRVELLTFQERYYKMKEERDSYNDELVKVKDDNYNLAMRYAQLSEEKNMAVMRSRDLQLEIDQLKHRLNKMEEECKLERNQSLKLKNDIENRPRKEQVLELERENEMLKTKIQELQSIIQAGKRSLPDSDKAILDILEHDRKEALEDRQELVNKIYNLQEEVRQAEELRDKYLEEKEDLELKCSTLGKDCEMYKHRMNTVMLQLEEVERERDQAFHSRDEAQTQYSQCLIEKDKYRKQIRELEEKNDEMRIEMVRREACIVNLESKLRRLSKDNGSLDQSLPRHLPATIISQNLGDTSPRTNGQEADDSSTSEESPEDSKYFLPYHPPRRRMNLKGIQLQRAKSPISMKQASEFQALMRTVKGHEEDFTDGSPSSSRSLPVTSSFSKMQPHRSRSSIMSITAEPPGNDSIVRRCKEDAPHRSTVEEDNDSCGFDALDLDDENHERYSFGPPSIHSSSSSHQSEGLDAYDLEQVNLMLRKFSLERPFRPSVTSGGHVRGTGPLVQHTTLNGDGLITQLTLLGGNARGSFIHSVKPGSLAERAGLREGHQLLLLEGCIRGERQSVPLDACTKEEARWTIQRCSGLITLHYKVNHEGYRKLLKEMEDGLITSGDSFYIRLNLNISSQLDACSMSLKCDDVVHVLDTMYQDRHEWLCARVDPFTDQDLDTGTIPSYSRAQQLLLVKLQRLVHRGNREEADSAHHTLRSLRNTLQPEEMLSTSDPRVSPRLSRASFFFGQLLQFVSRSENKYKRMNSNERVRIISGSPLGSLSRSSLDATKLLTEKHEELDPENELSRNLTLIPYSLVRAFHCERRRPVLFTPTMLAKTLVQKLLNSGGAMEFTICKSDIVTRDEFLRKQKTETIIYSREKNPNTFECIVPANIEAVAAKNKHCLLEAGIGCVRDLIKCKVYPIVLLIRVSEKNIKRFRKLLPRPETEEEFLRVCRLKEKELEALPCLYATVEAEMWSSVEELLRVLKDKIVEEQRKTIWVDEDQL.

The CARD domain occupies 18 to 110 (EEEALWDNVE…ELYKLVTGKE (93 aa)). The interval 111 to 128 (PTRRFSTIVVEEGHEGLT) is linker. Positions 176 to 449 (FQERYYKMKE…KDNGSLDQSL (274 aa)) form a coiled coil. A disordered region spans residues 441 to 496 (DNGSLDQSLPRHLPATIISQNLGDTSPRTNGQEADDSSTSEESPEDSKYFLPYHPP). Ser448 and Ser466 each carry phosphoserine. The segment at 450–671 (PRHLPATIIS…GHVRGTGPLV (222 aa)) is inhibitory domain (ID). The span at 457 to 472 (IISQNLGDTSPRTNGQ) shows a compositional bias: polar residues. Residues 473–484 (EADDSSTSEESP) show a composition bias toward acidic residues. Phosphoserine is present on residues Ser512 and Ser540. The interval 532–578 (HEEDFTDGSPSSSRSLPVTSSFSKMQPHRSRSSIMSITAEPPGNDSI) is disordered. Low complexity predominate over residues 540–554 (SPSSSRSLPVTSSFS). The residue at position 564 (Ser564) is a Phosphoserine; by PKC/PRKCB and PKC/PRKCQ. The residue at position 598 (Ser598) is a Phosphoserine. The disordered stretch occupies residues 610-631 (NHERYSFGPPSIHSSSSSHQSE). The segment covering 620-630 (SIHSSSSSHQS) has biased composition (low complexity). 2 positions are modified to phosphoserine; by PKC/PRKCB and PKC/PRKCQ: Ser649 and Ser657. The PDZ domain maps to 672 to 760 (QHTTLNGDGL…LITLHYKVNH (89 aa)). Phosphoserine occurs at positions 891 and 930. A Guanylate kinase-like domain is found at 978–1145 (RRRPVLFTPT…LLRVLKDKIV (168 aa)).

As to quaternary structure, homodimer; disulfide-linked. Homomultimer; polymerizes following activation, forming a nucleating helical template that seeds BCL10-filament formation via a CARD-CARD interaction. Interacts (via CARD domain) with BCL10 (via CARD domain); interaction takes place following CARD11 activation and polymerization, leading to the formation of a filamentous CBM complex assembly. Component of a CBM complex (CARD11-BCL10-MALT1) complex involved in NF-kappa-B activation. Found in a membrane raft complex, at least composed of BCL10, CARD11, DPP4 and IKBKB. Interacts (via PDZ domain) with DPP4 (via cytoplasmic tail). In terms of processing, phosphorylation at Ser-564, Ser-649 and Ser-657 by PRKCB and PRKCQ leads to a shift from an inactive to an active form that activates the NF-kappa-B signaling.

It localises to the cytoplasm. The protein resides in the membrane raft. Its activity is regulated as follows. Maintained in an autoinhibited state via homodimerization in which the CARD domain forms an extensive interaction with the adjacent linker and coiled-coil regions. Activation downstream of T-cell receptor (TCR) by phosphorylation by PRKCB and PRKCQ triggers CARD11 homooligomerization and BCL10 recruitment, followed by activation of NF-kappa-B. Its function is as follows. Adapter protein that plays a key role in adaptive immune response by transducing the activation of NF-kappa-B downstream of T-cell receptor (TCR) and B-cell receptor (BCR) engagement. Transduces signals downstream TCR or BCR activation via the formation of a multiprotein complex together with BCL10 and MALT1 that induces NF-kappa-B and MAP kinase p38 (MAPK11, MAPK12, MAPK13 and/or MAPK14) pathways. Upon activation in response to TCR or BCR triggering, CARD11 homooligomerizes to form a nucleating helical template that recruits BCL10 via CARD-CARD interaction, thereby promoting polymerization of BCL10 and subsequent recruitment of MALT1: this leads to I-kappa-B kinase (IKK) phosphorylation and degradation, and release of NF-kappa-B proteins for nuclear translocation. Its binding to DPP4 induces T-cell proliferation and NF-kappa-B activation in a T-cell receptor/CD3-dependent manner. Promotes linear ubiquitination of BCL10 by promoting the targeting of BCL10 to RNF31/HOIP. Stimulates the phosphorylation of BCL10. Also activates the TORC1 signaling pathway. The sequence is that of Caspase recruitment domain-containing protein 11 from Mus musculus (Mouse).